We begin with the raw amino-acid sequence, 736 residues long: Zinc finger MYND domain-containing protein 15 (736 aa).

Disordered regions lie at residues Ser-70–Pro-94 and Leu-109–Glu-192. The segment covering Glu-110 to Glu-123 has biased composition (acidic residues). 2 stretches are compositionally biased toward basic and acidic residues: residues His-124 to Pro-135 and Ala-165 to Arg-185. The Zn(2+) site is built by Cys-307, Cys-310, Cys-322, Cys-325, Cys-331, Cys-335, His-349, and Cys-353. The MYND-type zinc finger occupies Cys-307–Cys-353. Disordered regions lie at residues Asp-556–Arg-583 and Gly-696–Arg-736. Positions Gly-704–Pro-718 are enriched in pro residues. The span at Ala-719 to Arg-736 shows a compositional bias: basic residues.

Interacts with HDAC1, HDAC3, HDAC6 and, to a lesser extent, with HDAC7. Testis-specific. Expressed in pachytene spermatocytes and all developing spermatids, but not in Sertoli, nor Leydig cells (at protein level).

It is found in the nucleus. The protein resides in the cytoplasm. Functionally, acts as a transcriptional repressor through interaction with histone deacetylases (HDACs). May regulate haploid genes important for spermiogenesis. The protein is Zinc finger MYND domain-containing protein 15 (Zmynd15) of Mus musculus (Mouse).